The sequence spans 208 residues: Anti-sigma-W factor RsiW (208 aa).

Over 1-87 (MSCPEQIVQL…ASVKRWFRTH (87 aa)) the chain is Cytoplasmic. Zn(2+)-binding residues include cysteine 3, histidine 30, cysteine 34, and cysteine 37. The chain crosses the membrane as a helical span at residues 88–108 (PVIAAAAVFIILMGGGFFNSW). The Extracellular portion of the chain corresponds to 109–208 (HNDHNFSVSK…LDAFNPNGEE (100 aa)).

The protein belongs to the zinc-associated anti-sigma factor (ZAS) superfamily. Anti-sigma-W factor family. In terms of assembly, forms a heterodimer with cognate sigma factor SigW, which probably prevents SigW from binding to DNA. Zn(2+) is required as a cofactor. In terms of processing, is processed by successive proteolytic events. First, the extracellular region of RsiW is cleaved by PrsW (site-1 cleavage) in response to cell envelope stresses. In a reconstituted E.coli system PrsW cuts between Ala-168 and Ser-169 followed by trimming by E.coli Tsp; the endogenous extracellular exopeptidase responsible for the event in B.subtilis has not been identified. Next, it undergoes cleavage at an intramembrane site (site-2 cleavage) mediated by RasP. This cleavage uncovers a cryptic proteolytic tag with conserved alanine residues in the transmembrane segment, that is recognized mainly by the ClpXP protease, which completely degrades the protein in the cytoplasm and leads to the induction of the sigma-W-controlled genes.

Its subcellular location is the cell membrane. The anti-sigma factor for extracytoplasmic function (ECF) sigma factor sigma-W (SigW). Holds SigW, its cognate ECF sigma factor, in an inactive form until released by regulated intramembrane proteolysis (RIP). SigW and RsiW mediate cell response to cell wall stress. RIP occurs when an extracytoplasmic signal triggers a concerted proteolytic cascade to transmit information and elicit cellular responses. The membrane-spanning regulatory substrate protein is first cut periplasmically (site-1 protease, S1P, PrsW), then within the membrane itself (site-2 protease, S2P, RasP), while cytoplasmic proteases finish degrading the anti-sigma factor, liberating sigma-W. In Bacillus subtilis (strain 168), this protein is Anti-sigma-W factor RsiW (rsiW).